We begin with the raw amino-acid sequence, 456 residues long: Short chain dehydrogenase tazN (456 aa).

Positions 45, 99, 126, 160, 195, 199, and 229 each coordinate NADP(+). The active-site Proton donor is tyrosine 195. Lysine 199 (lowers pKa of active site Tyr) is an active-site residue.

It belongs to the short-chain dehydrogenases/reductases (SDR) family.

It functions in the pathway secondary metabolite biosynthesis. In terms of biological role, short chain dehydrogenase; part of the gene cluster that mediates the biosynthesis of azaterrilone A and other azaphilones, a class of fungal metabolites characterized by a highly oxygenated pyrano-quinone bicyclic core and exhibiting a broad range of bioactivities. The first step of the pathway begins with the non-reducing polyketide synthase tazA that assembles one acetyl-CoA starter unit, five malonyl-CoA units, and catalyzes a series of Claisen condensations, methylation, PT-mediated cyclization, and finally releases the first hexaketide precursor through the R-domain. The tazA product then undergoes reduction on its terminal ketone and the following pyran-ring formation by yet undetermined enzyme(s). Dehydration and enoyl reduction, possibly involving the trans-enoyl reductase tazE leads to the next intermediate. TazD is predicted as an acetyltransferase and might catalyze the acetylation steps leading to the synthesis of azaterrilone A. Azaterrilone A is not the final product of the taz pathway and both the highly reducing polyketide synthase tazB and the dual enzyme tazHJ catalyze late steps of the pathway, leading to the production of the 2 final stereoisomers that contain additional polyketide modification whose structures have still to be determined. This is Short chain dehydrogenase tazN from Aspergillus terreus (strain NIH 2624 / FGSC A1156).